Reading from the N-terminus, the 445-residue chain is Tubulin beta chain (445 aa).

The MREI motif motif lies at 1-4 (MREI). Gln11 contacts GTP. Position 40 is a phosphoserine (Ser40). Lys58 carries the N6-acetyllysine; alternate modification. Lys58 carries the post-translational modification N6-succinyllysine; alternate. A Glycyl lysine isopeptide (Lys-Gly) (interchain with G-Cter in ubiquitin); alternate cross-link involves residue Lys58. The GTP site is built by Glu69, Ser138, Gly142, Thr143, and Gly144. Glu69 contributes to the Mg(2+) binding site. At Ser172 the chain carries Phosphoserine; by CDK1. The GTP site is built by Asn204 and Asn226. Thr285 and Thr290 each carry phosphothreonine. Omega-N-methylarginine is present on Arg318. Lys324 is covalently cross-linked (Glycyl lysine isopeptide (Lys-Gly) (interchain with G-Cter in ubiquitin)). Residues 424–445 (QYQDATADEQGEFEEEGEEDEA) are disordered. Acidic residues predominate over residues 429–445 (TADEQGEFEEEGEEDEA). A 5-glutamyl polyglutamate modification is found at Glu438.

The protein belongs to the tubulin family. As to quaternary structure, dimer of alpha and beta chains. A typical microtubule is a hollow water-filled tube with an outer diameter of 25 nm and an inner diameter of 15 nM. Alpha-beta heterodimers associate head-to-tail to form protofilaments running lengthwise along the microtubule wall with the beta-tubulin subunit facing the microtubule plus end conferring a structural polarity. Microtubules usually have 13 protofilaments but different protofilament numbers can be found in some organisms and specialized cells. Interacts with NCKAP5L. Mg(2+) serves as cofactor. Post-translationally, some glutamate residues at the C-terminus are polyglycylated, resulting in polyglycine chains on the gamma-carboxyl group. Glycylation is mainly limited to tubulin incorporated into axonemes (cilia and flagella) whereas glutamylation is prevalent in neuronal cells, centrioles, axonemes, and the mitotic spindle. Both modifications can coexist on the same protein on adjacent residues, and lowering polyglycylation levels increases polyglutamylation, and reciprocally. Cilia and flagella glycylation is required for their stability and maintenance. Flagella glycylation controls sperm motility. Some glutamate residues at the C-terminus are polyglutamylated, resulting in polyglutamate chains on the gamma-carboxyl group. Polyglutamylation plays a key role in microtubule severing by spastin (SPAST). SPAST preferentially recognizes and acts on microtubules decorated with short polyglutamate tails: severing activity by SPAST increases as the number of glutamates per tubulin rises from one to eight, but decreases beyond this glutamylation threshold. In terms of processing, phosphorylated on Ser-172 by CDK1 during the cell cycle, from metaphase to telophase, but not in interphase. This phosphorylation inhibits tubulin incorporation into microtubules.

The protein resides in the cytoplasm. The protein localises to the cytoskeleton. Its function is as follows. Tubulin is the major constituent of microtubules, a cylinder consisting of laterally associated linear protofilaments composed of alpha- and beta-tubulin heterodimers. Microtubules grow by the addition of GTP-tubulin dimers to the microtubule end, where a stabilizing cap forms. Below the cap, tubulin dimers are in GDP-bound state, owing to GTPase activity of alpha-tubulin. The polypeptide is Tubulin beta chain (Sus scrofa (Pig)).